Consider the following 260-residue polypeptide: Thrombin-like enzyme acutobin (260 aa).

A signal peptide spans 1–18 (MVLIRVLANLLILQLSYA). The propeptide occupies 19-24 (QKSSEL). The 227-residue stretch at 25 to 251 (VIGGVECDIN…YNDWIRSITA (227 aa)) folds into the Peptidase S1 domain. Cystine bridges form between Cys31/Cys165, Cys52/Cys68, Cys102/Cys258, Cys144/Cys212, Cys176/Cys191, and Cys202/Cys227. The Charge relay system role is filled by His67. Residues Asn101 and Asn105 are each glycosylated (N-linked (GlcNAc...) asparagine). Asp112 functions as the Charge relay system in the catalytic mechanism. Asn124 carries an N-linked (GlcNAc...) asparagine glycan. The active-site Charge relay system is Ser206. A glycan (N-linked (GlcNAc...) asparagine) is linked at Asn253.

The protein belongs to the peptidase S1 family. Snake venom subfamily. Monomer. N-glycosylated. As to expression, expressed by the venom gland.

The protein localises to the secreted. Functionally, thrombin-like snake venom serine protease that coagulates human fibrinogen by hydrolysis of the alpha chains (FGA). The chain is Thrombin-like enzyme acutobin from Deinagkistrodon acutus (Hundred-pace snake).